The sequence spans 337 residues: UDP-3-O-acylglucosamine N-acyltransferase 2 (337 aa).

His238 functions as the Proton acceptor in the catalytic mechanism.

The protein belongs to the transferase hexapeptide repeat family. LpxD subfamily. As to quaternary structure, homotrimer.

The enzyme catalyses a UDP-3-O-[(3R)-3-hydroxyacyl]-alpha-D-glucosamine + a (3R)-hydroxyacyl-[ACP] = a UDP-2-N,3-O-bis[(3R)-3-hydroxyacyl]-alpha-D-glucosamine + holo-[ACP] + H(+). The protein operates within bacterial outer membrane biogenesis; LPS lipid A biosynthesis. In terms of biological role, catalyzes the N-acylation of UDP-3-O-acylglucosamine using 3-hydroxyacyl-ACP as the acyl donor. Is involved in the biosynthesis of lipid A, a phosphorylated glycolipid that anchors the lipopolysaccharide to the outer membrane of the cell. In Francisella tularensis subsp. tularensis (strain FSC 198), this protein is UDP-3-O-acylglucosamine N-acyltransferase 2.